We begin with the raw amino-acid sequence, 118 residues long: Large ribosomal subunit protein bL20c (118 aa).

The protein belongs to the bacterial ribosomal protein bL20 family.

The protein resides in the plastid. Its function is as follows. Binds directly to 23S ribosomal RNA and is necessary for the in vitro assembly process of the 50S ribosomal subunit. It is not involved in the protein synthesizing functions of that subunit. The chain is Large ribosomal subunit protein bL20c from Aneura mirabilis (Parasitic liverwort).